Reading from the N-terminus, the 977-residue chain is Ephrin type-A receptor 1 (977 aa).

The first 26 residues, 1 to 26 (MERRWPLGLALLLLLLCAPLPPGARA), serve as a signal peptide directing secretion. Topologically, residues 27-548 (EEVTLMDTST…PVSRSLTGGE (522 aa)) are extracellular. The 183-residue stretch at 28–210 (EVTLMDTSTA…FYQRCAETVH (183 aa)) folds into the Eph LBD domain. Fibronectin type-III domains are found at residues 333–446 (PPSA…MGHA) and 448–539 (SLSG…TSPP). 2 N-linked (GlcNAc...) asparagine glycosylation sites follow: N415 and N479. A helical membrane pass occupies residues 549-569 (IVAVIFGLLLGIALLIGIYVF). At 570 to 977 (RSRRGQRQRQ…ILCSIQGFKD (408 aa)) the chain is on the cytoplasmic side. 2 positions are modified to phosphotyrosine; by autocatalysis: Y600 and Y606. The Protein kinase domain maps to 625–885 (LIVDTVIGEG…QLQAHLEQLL (261 aa)). Residues 631–639 (IGEGEFGEV) and K657 contribute to the ATP site. D750 (proton acceptor) is an active-site residue. Y782 carries the post-translational modification Phosphotyrosine; by autocatalysis. S907 and S911 each carry phosphoserine. Positions 914–977 (IPYRSVSEWL…ILCSIQGFKD (64 aa)) constitute an SAM domain. The short motif at 975–977 (FKD) is the PDZ-binding element.

The protein belongs to the protein kinase superfamily. Tyr protein kinase family. Ephrin receptor subfamily. Homodimer. Forms a signaling complex with LCK; PTK2B/PYK2 and PI3-kinase upon activation by EFNA1; regulates T-lymphocytes migration. Interacts (via SAM domain) with ILK (via ANK repeats); stimulated by EFNA1 but independent of the kinase activity of EPHA1. Interacts (kinase activity-dependent) with PTK2/FAK1. Post-translationally, phosphorylated. Autophosphorylation is stimulated by its ligand EFNA1. In terms of processing, ubiquitinated. In terms of tissue distribution, preferentially expressed in epithelial cells including skin, kidney, liver and thymus. Expressed in myogenic progenitor cells.

The protein localises to the cell membrane. The catalysed reaction is L-tyrosyl-[protein] + ATP = O-phospho-L-tyrosyl-[protein] + ADP + H(+). Receptor tyrosine kinase which binds promiscuously membrane-bound ephrin-A family ligands residing on adjacent cells, leading to contact-dependent bidirectional signaling into neighboring cells. The signaling pathway downstream of the receptor is referred to as forward signaling while the signaling pathway downstream of the ephrin ligand is referred to as reverse signaling. Binds with a low affinity EFNA3 and EFNA4 and with a high affinity to EFNA1 which most probably constitutes its cognate/functional ligand. Upon activation by EFNA1 induces cell attachment to the extracellular matrix inhibiting cell spreading and motility through regulation of ILK and downstream RHOA and RAC. Also plays a role in angiogenesis and regulates cell proliferation. May play a role in apoptosis. In Mus musculus (Mouse), this protein is Ephrin type-A receptor 1 (Epha1).